Reading from the N-terminus, the 387-residue chain is Exodeoxyribonuclease 7 large subunit (387 aa).

The protein belongs to the XseA family. As to quaternary structure, heterooligomer composed of large and small subunits.

It localises to the cytoplasm. The enzyme catalyses Exonucleolytic cleavage in either 5'- to 3'- or 3'- to 5'-direction to yield nucleoside 5'-phosphates.. Functionally, bidirectionally degrades single-stranded DNA into large acid-insoluble oligonucleotides, which are then degraded further into small acid-soluble oligonucleotides. The protein is Exodeoxyribonuclease 7 large subunit of Synechococcus sp. (strain CC9605).